The chain runs to 144 residues: MIKFFLMVNKQGQTRLSKYYEHVDINKRTLLETEVIKSCLSRSNEQCSFIEYKDFKLIYRQYAALFIVVGVNDTENEMAIYEFIHNFVEVLDEYFSRVSELDIMFNLDKVHIILDEMVLNGCIVETNRARILAPLLILDKMSES.

It belongs to the adaptor complexes small subunit family. As to quaternary structure, adaptor protein complex 4 (AP-4) is a heterotetramer composed of two large adaptins (epsilon-type subunit AP4E1 and beta-type subunit AP4B1), a medium adaptin (mu-type subunit AP4M1) and a small adaptin (sigma-type AP4S1). As to expression, widely expressed.

The protein resides in the golgi apparatus. Its subcellular location is the trans-Golgi network membrane. Functionally, component of the adaptor protein complex 4 (AP-4). Adaptor protein complexes are vesicle coat components involved both in vesicle formation and cargo selection. They control the vesicular transport of proteins in different trafficking pathways. AP-4 forms a non clathrin-associated coat on vesicles departing the trans-Golgi network (TGN) and may be involved in the targeting of proteins from the trans-Golgi network (TGN) to the endosomal-lysosomal system. It is also involved in protein sorting to the basolateral membrane in epithelial cells and the proper asymmetric localization of somatodendritic proteins in neurons. AP-4 is involved in the recognition and binding of tyrosine-based sorting signals found in the cytoplasmic part of cargos, but may also recognize other types of sorting signal. This Homo sapiens (Human) protein is AP-4 complex subunit sigma-1.